The sequence spans 244 residues: L-xylulose reductase (244 aa).

At methionine 1 the chain carries N-acetylmethionine. Residue 11–39 participates in NADP(+) binding; it reads LVTGAGKGIGRSTVLALKAAGAQVVAVSR. Arginine 21 is subject to Omega-N-methylarginine. Serine 136 serves as a coordination point for substrate. Tyrosine 149 functions as the Proton acceptor in the catalytic mechanism. Residue lysine 153 is part of the active site.

Belongs to the short-chain dehydrogenases/reductases (SDR) family. In terms of assembly, homotetramer. As to expression, highly expressed in kidney and liver. Expressed in epididymis. Expressed at intermediate level in lung. Weakly expressed in brain, heart, spleen and testis.

The protein resides in the membrane. The catalysed reaction is xylitol + NADP(+) = L-xylulose + NADPH + H(+). In terms of biological role, catalyzes the NADPH-dependent reduction of several pentoses, tetroses, trioses, alpha-dicarbonyl compounds and L-xylulose. Participates in the uronate cycle of glucose metabolism. May play a role in the water absorption and cellular osmoregulation in the proximal renal tubules by producing xylitol, an osmolyte, thereby preventing osmolytic stress from occurring in the renal tubules. This Cavia porcellus (Guinea pig) protein is L-xylulose reductase (DCXR).